We begin with the raw amino-acid sequence, 97 residues long: Large ribosomal subunit protein bL28 (97 aa).

It belongs to the bacterial ribosomal protein bL28 family.

This chain is Large ribosomal subunit protein bL28, found in Rickettsia peacockii (strain Rustic).